A 148-amino-acid chain; its full sequence is Nucleoside diphosphate kinase (148 aa).

Residues Lys9, Phe57, Arg85, Thr91, Arg102, and Asn112 each coordinate ATP. Residue His115 is the Pros-phosphohistidine intermediate of the active site.

Belongs to the NDK family. In terms of assembly, homotetramer. Requires Mg(2+) as cofactor.

The protein resides in the cytoplasm. The catalysed reaction is a 2'-deoxyribonucleoside 5'-diphosphate + ATP = a 2'-deoxyribonucleoside 5'-triphosphate + ADP. The enzyme catalyses a ribonucleoside 5'-diphosphate + ATP = a ribonucleoside 5'-triphosphate + ADP. Its function is as follows. Major role in the synthesis of nucleoside triphosphates other than ATP. The ATP gamma phosphate is transferred to the NDP beta phosphate via a ping-pong mechanism, using a phosphorylated active-site intermediate. This chain is Nucleoside diphosphate kinase, found in Macrococcus caseolyticus (strain JCSC5402) (Macrococcoides caseolyticum).